The primary structure comprises 781 residues: DEAD-box ATP-dependent RNA helicase 50 (781 aa).

Disordered regions lie at residues 72-103, 117-148, 166-240, 254-292, and 313-342; these read EFAP…LTAS, GKVT…DEGF, IPRS…KGDR, GRAI…REDR, and YNPR…RGWG. A compositionally biased stretch (low complexity) spans 79–88; sequence SDLLSSIPSE. Positions 130-143 are enriched in acidic residues; that stretch reads EEEDEDDASDENYS. The segment covering 171-197 has biased composition (basic and acidic residues); it reads KSAERNEVKRASKVRESRESRRDLDRL. Positions 198–208 are enriched in acidic residues; that stretch reads EGDDEDVDEVS. Over residues 216-226 the composition is skewed to polar residues; it reads NQRAGSRSSYS. The segment covering 254–274 has biased composition (basic and acidic residues); sequence GRAIDEVSNPRKFNDNERAES. Positions 275–286 are enriched in low complexity; that stretch reads RSSYSRDSSANS. Positions 313–325 are enriched in basic and acidic residues; sequence YNPRRFTDNERGL. A Q motif motif is present at residues 374-402; sequence KTFAEIGCSEDMMKALKEQNFDRPAHIQA. In terms of domain architecture, Helicase ATP-binding spans 405 to 586; it reads FSPVIDGKSC…VEVFPDCEVV (182 aa). 418-425 is an ATP binding site; sequence DQSGSGKT. The DEAD box motif lies at 533 to 536; that stretch reads DEVD. Residues 621-781 form the Helicase C-terminal domain; it reads NKKTALLQIM…DVPNAYEFTT (161 aa).

Belongs to the DEAD box helicase family.

It catalyses the reaction ATP + H2O = ADP + phosphate + H(+). Probably involved in resistance to biotic and abiotic stresses. This chain is DEAD-box ATP-dependent RNA helicase 50 (RH50), found in Arabidopsis thaliana (Mouse-ear cress).